Here is a 384-residue protein sequence, read N- to C-terminus: Probable inactive linolenate hydroperoxide lyase (384 aa).

Heme is bound at residue Cys-346.

It belongs to the cytochrome P450 family. The cofactor is heme. As to expression, expressed in roots, leaves, flowers and siliques.

The polypeptide is Probable inactive linolenate hydroperoxide lyase (Arabidopsis thaliana (Mouse-ear cress)).